Consider the following 417-residue polypeptide: D-inositol 3-phosphate glycosyltransferase (417 aa).

H15 is a 1D-myo-inositol 3-phosphate binding site. UDP-N-acetyl-alpha-D-glucosamine-binding positions include 21-22 and G29; that span reads QP. 1D-myo-inositol 3-phosphate is bound by residues 26–31, K84, Y117, T141, and R161; that span reads DAGGMN. 3 residues coordinate UDP-N-acetyl-alpha-D-glucosamine: R241, K246, and V299. Mg(2+) contacts are provided by Y308, R309, and A311. Residues E321 and E329 each coordinate UDP-N-acetyl-alpha-D-glucosamine. T335 is a binding site for Mg(2+).

This sequence belongs to the glycosyltransferase group 1 family. MshA subfamily. In terms of assembly, homodimer.

The enzyme catalyses 1D-myo-inositol 3-phosphate + UDP-N-acetyl-alpha-D-glucosamine = 1D-myo-inositol 2-acetamido-2-deoxy-alpha-D-glucopyranoside 3-phosphate + UDP + H(+). Catalyzes the transfer of a N-acetyl-glucosamine moiety to 1D-myo-inositol 3-phosphate to produce 1D-myo-inositol 2-acetamido-2-deoxy-glucopyranoside 3-phosphate in the mycothiol biosynthesis pathway. The chain is D-inositol 3-phosphate glycosyltransferase from Xylanimonas cellulosilytica (strain DSM 15894 / JCM 12276 / CECT 5975 / KCTC 9989 / LMG 20990 / NBRC 107835 / XIL07).